We begin with the raw amino-acid sequence, 547 residues long: Phospholipase DDHD1 (547 aa).

Residue S184 is part of the active site. The 276-residue stretch at 258–533 (LKFKVENFFC…ALFLLTFMYK (276 aa)) folds into the DDHD domain. A Phosphoserine modification is found at S370. The interval 414–448 (RSSASQPSEPSKDSLEDDKKPSASPSTTTVATQTL) is disordered. Over residues 423 to 434 (PSKDSLEDDKKP) the composition is skewed to basic and acidic residues. The span at 435 to 448 (SASPSTTTVATQTL) shows a compositional bias: low complexity.

This sequence belongs to the PA-PLA1 family. As to quaternary structure, forms homooligomers and, to a much smaller extent, heterooligomers with DDHD2. Interacts with SEC23A and SEC24C. In terms of tissue distribution, predominantly expressed in testis, in round and elongating spermatids, but not in spermatocytes (at protein level). Also expressed in the brain, and at lower levels in other tissues such as thymus and lung (at protein level).

The protein localises to the cytoplasm. The catalysed reaction is a 1,2-diacyl-sn-glycero-3-phosphate + H2O = a 2-acyl-sn-glycerol 3-phosphate + a fatty acid + H(+). It catalyses the reaction a 1,2-diacyl-sn-glycero-3-phospho-(1D-myo-inositol) + H2O = a 2-acyl-sn-glycero-3-phospho-D-myo-inositol + a fatty acid + H(+). The enzyme catalyses 1-octadecanoyl-2-(5Z,8Z,11Z,14Z-eicosatetraenoyl)-sn-glycero-3-phospho-(1D-myo-inositol) + H2O = 2-(5Z,8Z,11Z,14Z-eicosatetraenoyl)-sn-glycero-3-phospho-(1D-myo-inositol) + octadecanoate + H(+). It carries out the reaction a 1-acyl-2-(5Z,8Z,11Z,14Z-eicosatetraenoyl)-sn-glycero-3-phospho-(1D-myo-inositol) + H2O = 2-(5Z,8Z,11Z,14Z-eicosatetraenoyl)-sn-glycero-3-phospho-(1D-myo-inositol) + a fatty acid + H(+). The catalysed reaction is 1,2-dihexadecanoyl-sn-glycero-3-phospho-(1D-myo-inositol) + H2O = 2-hexadecanoyl-sn-glycero-3-phospho-(1D-myo-inositol) + hexadecanoate + H(+). It catalyses the reaction a 1-acyl-2-(5Z,8Z,11Z,14Z)-eicosatetraenoyl-sn-glycero-3-phosphate + H2O = 2-(5Z,8Z,11Z,14Z-eicosatetraenoyl)-sn-glycero-3-phosphate + a fatty acid + H(+). The enzyme catalyses 1-(9Z-octadecenoyl)-2-(7Z,10Z,13Z,16Z,19Z-docosapentaenoyl)-sn-glycero-3-phospho-1D-myo-inositol + H2O = 2-(7Z,10Z,13Z,16Z,19Z-docosapentaenoyl)-sn-glycero-3-phospho-1D-myo-inositol + (9Z)-octadecenoate + H(+). It carries out the reaction 1-(9Z-octadecenoyl)-2-(5Z,8Z,11Z,14Z-eicosatetraenoyl)-sn-glycero-3-phospho-1D-myo-inositol + H2O = 2-(5Z,8Z,11Z,14Z-eicosatetraenoyl)-sn-glycero-3-phospho-(1D-myo-inositol) + (9Z)-octadecenoate + H(+). The catalysed reaction is 1,2-di-(9Z-octadecenoyl)-sn-glycero-3-phospho-1D-myo-inositol + H2O = 2-(9Z-octadecenoyl)-sn-glycero-3-phospho-1D-myo-inositol + (9Z)-octadecenoate + H(+). It catalyses the reaction 1-(9Z-octadecenoyl)-2-(8Z,11Z,14Z-eicosatrienoyl)-sn-glycero-3-phospho-1D-myo-inositol + H2O = 2-(8Z,11Z,14Z-eicosatrienoyl)-sn-glycero-3-phospho-1D-myo-inositol + (9Z)-octadecenoate + H(+). The enzyme catalyses 1,2-di-(9Z-octadecenoyl)-sn-glycero-3-phosphate + H2O = 2-(9Z-octadecenoyl)-sn-glycero-3-phosphate + (9Z)-octadecenoate + H(+). It carries out the reaction 1-hexadecanoyl-2-(9Z-octadecenoyl)-sn-glycero-3-phosphate + H2O = 2-(9Z-octadecenoyl)-sn-glycero-3-phosphate + hexadecanoate + H(+). The catalysed reaction is 1-hexadecanoyl-2-(9Z-octadecenoyl)-sn-glycero-3-phospho-L-serine + H2O = 2-(9Z-octadecenoyl)-sn-glycero-3-phospho-L-serine + hexadecanoate + H(+). It catalyses the reaction 1,2-di-(5Z,8Z,11Z,14Z)-eicosatetraenoyl-sn-glycero-3-phosphate + H2O = 2-(5Z,8Z,11Z,14Z-eicosatetraenoyl)-sn-glycero-3-phosphate + (5Z,8Z,11Z,14Z)-eicosatetraenoate + H(+). The enzyme catalyses 1-octadecanoyl-2-(5Z,8Z,11Z,14Z-eicosatetraenoyl)-sn-glycero-3-phosphate + H2O = 2-(5Z,8Z,11Z,14Z-eicosatetraenoyl)-sn-glycero-3-phosphate + octadecanoate + H(+). It carries out the reaction a 1,2-diacyl-sn-glycero-3-phospho-L-serine + H2O = a 2-acyl-sn-glycero-3-phospho-L-serine + a fatty acid + H(+). The catalysed reaction is a 1,2-diacyl-sn-glycero-3-phosphocholine + H2O = a 2-acyl-sn-glycero-3-phosphocholine + a fatty acid + H(+). It catalyses the reaction 1,2-di-(9Z-octadecenoyl)-sn-glycero-3-phosphocholine + H2O = (9Z-octadecenoyl)-sn-glycero-3-phosphocholine + (9Z)-octadecenoate + H(+). The enzyme catalyses a 1,2-diacyl-sn-glycero-3-phosphoethanolamine + H2O = a 2-acyl-sn-glycero-3-phosphoethanolamine + a fatty acid + H(+). It carries out the reaction a 1,2-diacyl-sn-glycero-3-phospho-(1'-sn-glycerol) + H2O = 2-acyl-sn-glycero-3-phospho-(1'-sn-glycerol) + a fatty acid + H(+). The catalysed reaction is 1-hexadecanoyl-2-(9Z-octadecenoyl)-sn-glycero-3-phospho-(1'-sn-glycerol) + H2O = 2-(9Z-octadecenoyl)-sn-glycero-3-phospho-(1'-sn-glycerol) + hexadecanoate + H(+). It catalyses the reaction 1-acyl-2-(5Z,8Z,11Z,14Z-eicosatetraenoyl)-sn-glycero-3-phosphocholine + H2O = 2-(5Z,8Z,11Z,14Z)-eicosatetraenoyl-sn-glycero-3-phosphocholine + a fatty acid + H(+). The enzyme catalyses 1-acyl-2-(5Z,8Z,11Z,14Z)-eicosatetraenoyl-sn-glycero-3-phosphoethanolamine + H2O = 2-(5Z,8Z,11Z,14Z)-eicosatetraenoyl-sn-glycero-3-phosphoethanolamine + a fatty acid + H(+). It functions in the pathway phospholipid metabolism; phosphatidylinositol metabolism. Phospholipase A1 (PLA1) that hydrolyzes ester bonds at the sn-1 position of glycerophospholipids producing a free fatty acid and a lysophospholipid. Prefers phosphatidate (1,2-diacyl-sn-glycero-3-phosphate, PA) as substrate in vitro, but can efficiently hydrolyze phosphatidylinositol (1,2-diacyl-sn-glycero-3-phospho-(1D-myo-inositol), PI), as well as a range of other glycerophospholipid substrates such as phosphatidylcholine (1,2-diacyl-sn-glycero-3-phosphocholine, PC), phosphatidylethanolamine (1,2-diacyl-sn-glycero-3-phosphoethanolamine, PE), phosphatidylserine (1,2-diacyl-sn-glycero-3-phospho-L-serine, PS) and phosphatidylglycerol (1,2-diacyl-sn-glycero-3-phospho-(1'-sn-glycerol), PG). Involved in the regulation of the endogenous content of polyunsaturated PI and PS lipids in the nervous system. Changes in these lipids extend to downstream metabolic products like PI phosphates PIP and PIP2, which play fundamental roles in cell biology. Regulates mitochondrial morphology. These dynamic changes may be due to PA hydrolysis at the mitochondrial surface. May play a regulatory role in spermatogenesis or sperm function. This Mus musculus (Mouse) protein is Phospholipase DDHD1.